The following is a 413-amino-acid chain: MMIAQELGIYVVESKGGAILCLLLSLLCLGTWPALMALLERRGRLPQHTYLDYSITNFLAAIFIAFVFGGIGESTHEAPSFITQLTQIQDNWPSVLFAMAGGVGLSIGNLATQYSLAFVGLSVTEVTAASITVVVGTTVNYFLDNGLNRADILFSGVGCFMVAVCLGSAVHSSNSADIKAKLGKLSGDCETVTPEECQRLFGVEEEEEEEKEMENVKEGSAAFLIALENKRAIKVLGKSMVVGLGITFFAGLSFSLFSPLFNLATNDQWHTLKQGVPKLIVYTAFFYFSLSCFVIAVALNISFLYKPVLDSPRSSFREYLSDWNGRGWALAAGLLCGFGNGLQFMGGQAAGYAASDAVQALPLVSTFWGIYLFGEYRRSSTRTYALLVGMLVMFTVAVGLLMASAGERETRFT.

Topologically, residues 1-18 are extracellular; that stretch reads MMIAQELGIYVVESKGGA. A helical transmembrane segment spans residues 19–39; sequence ILCLLLSLLCLGTWPALMALL. The Cytoplasmic segment spans residues 40–50; that stretch reads ERRGRLPQHTY. The chain crosses the membrane as a helical span at residues 51 to 71; it reads LDYSITNFLAAIFIAFVFGGI. The Extracellular segment spans residues 72-91; it reads GESTHEAPSFITQLTQIQDN. A helical transmembrane segment spans residues 92 to 112; the sequence is WPSVLFAMAGGVGLSIGNLAT. Over 113–115 the chain is Cytoplasmic; sequence QYS. A helical transmembrane segment spans residues 116-136; sequence LAFVGLSVTEVTAASITVVVG. Residues 137 to 149 lie on the Extracellular side of the membrane; sequence TTVNYFLDNGLNR. A helical membrane pass occupies residues 150 to 170; that stretch reads ADILFSGVGCFMVAVCLGSAV. At 171-240 the chain is on the cytoplasmic side; it reads HSSNSADIKA…RAIKVLGKSM (70 aa). An ATP-binding site is contributed by 232-239; it reads AIKVLGKS. A helical membrane pass occupies residues 241–261; it reads VVGLGITFFAGLSFSLFSPLF. At 262 to 278 the chain is on the extracellular side; the sequence is NLATNDQWHTLKQGVPK. Residues 279–299 traverse the membrane as a helical segment; the sequence is LIVYTAFFYFSLSCFVIAVAL. Topologically, residues 300-326 are cytoplasmic; it reads NISFLYKPVLDSPRSSFREYLSDWNGR. Residues 327 to 347 form a helical membrane-spanning segment; the sequence is GWALAAGLLCGFGNGLQFMGG. Residues 348 to 352 are Extracellular-facing; the sequence is QAAGY. Residues 353-373 traverse the membrane as a helical segment; it reads AASDAVQALPLVSTFWGIYLF. The Cytoplasmic segment spans residues 374 to 384; that stretch reads GEYRRSSTRTY. A helical membrane pass occupies residues 385 to 405; the sequence is ALLVGMLVMFTVAVGLLMASA. Topologically, residues 406 to 413 are extracellular; sequence GERETRFT.

Belongs to the plant ureide permease (TC 2.A.7.19) family. In terms of tissue distribution, expressed in lateral roots, rosette leaves, stems, stipules, flower stigma, pedicels and the connective tissue between pollen sacks.

The protein localises to the membrane. Proton-coupled transporter that transports a wide spectrum of oxo derivatives of heterocyclic nitrogen compounds, including allantoin, uric acid and xanthine, but not adenine. Mediates transport of uracil and 5-fluorouracil (a toxic uracil analog). In terms of biological role, proton-coupled transporter that transports a wide spectrum of oxo derivatives of heterocyclic nitrogen compounds, including allantoin, xanthine and uracil. In Arabidopsis thaliana (Mouse-ear cress), this protein is Ureide permease 5.